Reading from the N-terminus, the 197-residue chain is CASP-like protein 1B2 (197 aa).

An N-acetylalanine modification is found at Ala2. Residues 2–17 (AREKIVVAGGTTKSWK) lie on the Cytoplasmic side of the membrane. A helical membrane pass occupies residues 18–38 (LLLGLRIFAFMATLAAAIVMS). Topologically, residues 39 to 69 (LNKETKTLVVATIGTVPIKATLTAKFQHTPA) are extracellular. A helical membrane pass occupies residues 70-90 (FVFFVIANVMVSFHNLLMIVV). The Cytoplasmic segment spans residues 91–106 (QIFSRKLEYKGLRLLS). A helical transmembrane segment spans residues 107-127 (IAILDMLNATLVSAAANAAVF). Topologically, residues 128–156 (VAELGKNGNKHAKWNKVCDRFTTYCDHGA) are extracellular. The chain crosses the membrane as a helical span at residues 157–177 (GAIIAAFAGVILMLLVSAVSI). Topologically, residues 178-197 (SRLLINSKNFSTTATTTSVV) are cytoplasmic.

Belongs to the Casparian strip membrane proteins (CASP) family. In terms of assembly, homodimer and heterodimers.

Its subcellular location is the cell membrane. The protein is CASP-like protein 1B2 of Arabidopsis thaliana (Mouse-ear cress).